We begin with the raw amino-acid sequence, 472 residues long: MPQTPPFSAMFDSSGYNRNLYQSAEDSCGGLYYHDNNLLSGSLEALIQHLVPNVDYYPDRTYIFTFLLSSRLFMHPYELMAKVCHLCVEHQRLSDPNSDKNQIRKIAPKILQLLTEWTETFPYDFRDERMMRNLKDLAHRIASGEETYRKNVQQMIQCLIRKLAALSQYEEVLAKISSTSTDRLTVLKTKPQSIQRDIITVCSDPYTLAQQLTHIELERLNYIGPEEFVQAFVQKDPLDNDKSCYSERKKTRNLEAYVEWFNRLSYLVATEICMPVKKKHRARMIEYFIDVARECFNIGNFNSLMAIISGMNMSPVSRLKKTWAKVKTAKFDVLEHQMDPSSNFYNYRTALRGAAQRSLTAHSSREKIVIPFFSLLIKDIYFLNEGCANRLPNGHVNFEKFWELAKQVSEFMTWKQVECPFERDRKILQHLLTVPVFSEDALYLASYESEGPENHIEKDRWKSLRSSLLGRV.

The region spanning 34 to 164 (HDNNLLSGSL…MIQCLIRKLA (131 aa)) is the N-terminal Ras-GEF domain. One can recognise a Ras-GEF domain in the interval 204-452 (DPYTLAQQLT…YLASYESEGP (249 aa)).

As to quaternary structure, interacts with CCDC124 during cytokinesis. Interacts with Ras family proteins.

The protein localises to the early endosome. Its subcellular location is the late endosome. It localises to the midbody. Its function is as follows. Guanine nucleotide exchange factor (GEF) with specificity for RAP2A, it doesn't seems to activate other Ras family proteins (in vitro). The sequence is that of Ras-GEF domain-containing family member 1B (RASGEF1B) from Bos taurus (Bovine).